A 178-amino-acid chain; its full sequence is Large ribosomal subunit protein uL6 (178 aa).

It belongs to the universal ribosomal protein uL6 family. In terms of assembly, part of the 50S ribosomal subunit.

This protein binds to the 23S rRNA, and is important in its secondary structure. It is located near the subunit interface in the base of the L7/L12 stalk, and near the tRNA binding site of the peptidyltransferase center. This chain is Large ribosomal subunit protein uL6, found in Staphylococcus saprophyticus subsp. saprophyticus (strain ATCC 15305 / DSM 20229 / NCIMB 8711 / NCTC 7292 / S-41).